The sequence spans 87 residues: Small ribosomal subunit protein bS16 (87 aa).

Belongs to the bacterial ribosomal protein bS16 family.

The sequence is that of Small ribosomal subunit protein bS16 from Ehrlichia ruminantium (strain Welgevonden).